The sequence spans 182 residues: Troponin I, fast skeletal muscle (182 aa).

Glycine 2 bears the N-acetylglycine mark. The involved in binding TNC stretch occupies residues 2–48; sequence GDEEKRNRAITARRQHLKSVMLQIAATELEKEESRREAEKQNYLAEH. The residue at position 12 (threonine 12) is a Phosphothreonine. The tract at residues 97-117 is involved in binding TNC and actin; the sequence is NQKLFDLRGKFKRPPLRRVRM. Serine 118 is subject to Phosphoserine.

This sequence belongs to the troponin I family. Binds to actin and tropomyosin.

Its function is as follows. Troponin I is the inhibitory subunit of troponin, the thin filament regulatory complex which confers calcium-sensitivity to striated muscle actomyosin ATPase activity. This is Troponin I, fast skeletal muscle (TNNI2) from Homo sapiens (Human).